Reading from the N-terminus, the 160-residue chain is MYPFKHSPHCITDEECDLQLRSFCSWIRVIEMRCTDWTIQYICSCETPRSLFCLSLIRVLTAHWAKTVVNFVAQHDHQPQLPLNLILYTYATHCRLCNLNPALEQIYTAVTVARRQGAYTRLEGQTLYVCLPRDIVNYPCIACFYHLLLRLPVAINFHVI.

This is an uncharacterized protein from Galliformes (FAdV-1).